The sequence spans 397 residues: tRNA (guanine-N(7)-)-methyltransferase non-catalytic subunit wuho (397 aa).

WD repeat units lie at residues 75 to 115, 163 to 202, 206 to 244, and 303 to 343; these read KVEV…AQLL, GHLS…DIHS, GHKE…ELLL, and AGTW…RASG.

Belongs to the WD repeat TRM82 family. In terms of assembly, forms a heterodimer with the catalytic subunit Mettl1. Interacts with mei-P26 and weakly interacts with bgcn; required for the function or formation of the mei-P26-bgcn-bam-sxl complex. Interacts with nanos; may be involved in mei-P26-dependent derepression of the BMP signaling pathway. Interacts with Myc; the interaction may be mediated by mei-P26 and may be involved in the regulation of ribosome biogenesis. In terms of tissue distribution, in testis, it is present at high level in hub cells, a niche for germline stem cells of testis. Ubiquitously expressed in all testicular cells throughout spermatogenesis. Ubiquitously expressed in all germline and somatic cells of the ovary.

It localises to the nucleus. It is found in the cytoplasm. The protein operates within tRNA modification; N(7)-methylguanine-tRNA biosynthesis. Functionally, required for the Mettl1-dependent formation of N(7)-methylguanine at position 46 (m7G46) in tRNA. In the Mettl1-wuho methyltransferase complex, it is required to stabilize and induce conformational changes of the catalytic subunit. Required for binding of nanos mRNA and repression of translation by the mei-P26-bgcn-bam-sxl complex. May cooperate with mei-P26 and nanos to derepress the BMP signaling pathway. May cooperate with mei-P26 to suppress expression of a subset of microRNAs. May cooperate with mei-P26 to regulate bam expression levels in germline cells during gametogenesis. Required to promote mitosis to meiosis transition during gametogenesis. May regulate germline cell division in part by regulating ribosome biogenesis. This Drosophila persimilis (Fruit fly) protein is tRNA (guanine-N(7)-)-methyltransferase non-catalytic subunit wuho.